Here is a 276-residue protein sequence, read N- to C-terminus: UPF0328 protein ECU04_0100 (276 aa).

Positions 1 to 24 (MGIIDVQRSHLTATPSKERDAPAH) are disordered.

The protein belongs to the UPF0328 family.

The chain is UPF0328 protein ECU04_0100 from Encephalitozoon cuniculi (strain GB-M1) (Microsporidian parasite).